Consider the following 61-residue polypeptide: Large ribosomal subunit protein bL28 (61 aa).

The disordered stretch occupies residues 1–26; that stretch reads MAKDYVTGKRTHFGNTRSHALNHSRR.

It belongs to the bacterial ribosomal protein bL28 family.

The sequence is that of Large ribosomal subunit protein bL28 from Lactiplantibacillus plantarum (strain ATCC BAA-793 / NCIMB 8826 / WCFS1) (Lactobacillus plantarum).